The primary structure comprises 333 residues: Nucleoid-associated protein APL_0429 (333 aa).

The protein belongs to the YejK family.

The protein localises to the cytoplasm. It is found in the nucleoid. This Actinobacillus pleuropneumoniae serotype 5b (strain L20) protein is Nucleoid-associated protein APL_0429.